We begin with the raw amino-acid sequence, 190 residues long: Threonylcarbamoyl-AMP synthase (190 aa).

In terms of domain architecture, YrdC-like spans Thr7 to Gly190.

The protein belongs to the SUA5 family. TsaC subfamily.

It is found in the cytoplasm. It catalyses the reaction L-threonine + hydrogencarbonate + ATP = L-threonylcarbamoyladenylate + diphosphate + H2O. Its function is as follows. Required for the formation of a threonylcarbamoyl group on adenosine at position 37 (t(6)A37) in tRNAs that read codons beginning with adenine. Catalyzes the conversion of L-threonine, HCO(3)(-)/CO(2) and ATP to give threonylcarbamoyl-AMP (TC-AMP) as the acyladenylate intermediate, with the release of diphosphate. The protein is Threonylcarbamoyl-AMP synthase of Salmonella paratyphi A (strain ATCC 9150 / SARB42).